Reading from the N-terminus, the 638-residue chain is Terrein cluster-specific transcription factor terR (638 aa).

Positions 50–76 (CDMCKSKKVRCDGGTPCSYCNLHDLRC) form a DNA-binding region, zn(2)-C6 fungal-type.

Its subcellular location is the nucleus. Its function is as follows. Transcription factor that regulates specifically the terrein biosynthesis gene cluster. Recognizes CGG direct repeat consensus sequences in the terrein cluster forming the high affinity consensus motif TCGGHHWYHCGGH. The chain is Terrein cluster-specific transcription factor terR from Aspergillus terreus (strain NIH 2624 / FGSC A1156).